A 265-amino-acid chain; its full sequence is Novel plant SNARE 11 (265 aa).

The Cytoplasmic portion of the chain corresponds to 1 to 215 (MDPISAVSEE…IGRQVATDKC (215 aa)). Positions 30–75 (QKLEKIKDANRQSRQLEELTDKMRDCKSLIKDFDREIKSLESGNDA) form a coiled coil. The t-SNARE coiled-coil homology domain maps to 144–206 (NSMMDDTDQA…KKASKLVKEI (63 aa)). A helical; Anchor for type IV membrane protein membrane pass occupies residues 216 to 236 (IMAFLFLIVIGVIAIIIVKIV). The Vesicular segment spans residues 237–265 (NPNNKDIRDIPGVGLAPPAMNRRLLWNHY).

The protein belongs to the novel plant SNARE family. As to quaternary structure, interacts with KNOLLE to form a t-SNARE complex. Does not interact with SYP21, VTI12 or VPS45. In terms of tissue distribution, expressed in roots, stems, flower, siliques, expanding leaves, but not in mature leaves. Not limited to dividing cells.

The protein resides in the membrane. Functionally, t-SNARE involved in diverse vesicle trafficking and membrane fusion processes, including cell plate formation. This chain is Novel plant SNARE 11 (NPSN11), found in Arabidopsis thaliana (Mouse-ear cress).